A 348-amino-acid polypeptide reads, in one-letter code: Tetraacyldisaccharide 4'-kinase (348 aa).

V65–T72 contacts ATP. The segment at P89–D117 is disordered.

Belongs to the LpxK family.

It carries out the reaction a lipid A disaccharide + ATP = a lipid IVA + ADP + H(+). It functions in the pathway glycolipid biosynthesis; lipid IV(A) biosynthesis; lipid IV(A) from (3R)-3-hydroxytetradecanoyl-[acyl-carrier-protein] and UDP-N-acetyl-alpha-D-glucosamine: step 6/6. Its function is as follows. Transfers the gamma-phosphate of ATP to the 4'-position of a tetraacyldisaccharide 1-phosphate intermediate (termed DS-1-P) to form tetraacyldisaccharide 1,4'-bis-phosphate (lipid IVA). In Leptothrix cholodnii (strain ATCC 51168 / LMG 8142 / SP-6) (Leptothrix discophora (strain SP-6)), this protein is Tetraacyldisaccharide 4'-kinase.